A 439-amino-acid polypeptide reads, in one-letter code: MQRRRGRTERARKRRRRSSGSRAVNESYRSEFIELRKWLKERKFEDTDLVPASFPGTGRGLMSKASLQEGQVMISLPESCLLTTDTVIRSSLGPYIKKWKPPVSPLLALCTFLVSEKHAGCRSLWKSYLDILPKSYTCPVCLEPEVVDLLPSPLKAKAEEQRARVQDLFTSARGFFSTLQPLFAEPVDSVFSYRAFLWAWCTVNTRAVYLRSRRQECLSAEPDTCALAPFLDLLNHSPHVQVKAAFNEKTRCYEIRTASRCRKHQEVFICYGPHDNQRLLLEYGFVSVRNPHACVPVSADMLVKFLPAADKQLHRKITILKDHGFTGNLTFGWDGPSWRLLTALKLLCLEAERFTSWKKVLLGEVISDTNEKTSLGVAQKICSDVIEETHAVLRKVSDMKEGTVSLRSQLSLVEALRMEELRILQASAEILSGLLAPFS.

Over residues 1 to 19 (MQRRRGRTERARKRRRRSS) the composition is skewed to basic residues. The segment at 1–25 (MQRRRGRTERARKRRRRSSGSRAVN) is disordered. In terms of domain architecture, SET spans 47–272 (TDLVPASFPG…KHQEVFICYG (226 aa)). Tyr-271 provides a ligand contact to S-adenosyl-L-methionine.

It belongs to the class V-like SAM-binding methyltransferase superfamily. SETD4 family. As to quaternary structure, forms a ternary complex with TBK1 and ZNF268; the interaction with TBK1 is ZNF268-dependent and leads to TBK1 monomethylation. As to expression, expressed in the forebrain subventricular zone, in quiescent neural stem cells.

The protein localises to the cytoplasm. It localises to the cytosol. It is found in the nucleus. The catalysed reaction is L-lysyl(4)-[histone H3] + S-adenosyl-L-methionine = N(6)-methyl-L-lysyl(4)-[histone H3] + S-adenosyl-L-homocysteine + H(+). It carries out the reaction N(6)-methyl-L-lysyl(4)-[histone H3] + S-adenosyl-L-methionine = N(6),N(6)-dimethyl-L-lysyl(4)-[histone H3] + S-adenosyl-L-homocysteine + H(+). The enzyme catalyses L-lysyl(20)-[histone H4] + S-adenosyl-L-methionine = N(6)-methyl-L-lysyl(20)-[histone H4] + S-adenosyl-L-homocysteine + H(+). It catalyses the reaction N(6)-methyl-L-lysyl(20)-[histone H4] + S-adenosyl-L-methionine = N(6),N(6)-dimethyl-L-lysyl(20)-[histone H4] + S-adenosyl-L-homocysteine + H(+). The catalysed reaction is N(6),N(6)-dimethyl-L-lysyl(20)-[histone H4] + S-adenosyl-L-methionine = N(6),N(6),N(6)-trimethyl-L-lysyl(20)-[histone H4] + S-adenosyl-L-homocysteine + H(+). It carries out the reaction L-lysyl-[protein] + S-adenosyl-L-methionine = N(6)-methyl-L-lysyl-[protein] + S-adenosyl-L-homocysteine + H(+). Functionally, protein-lysine N-methyltransferase that methylates both histones and non-histone proteins. Via its catalytic activity, regulates many processes, including cell proliferation, cell differentiation, inflammatory response and apoptosis. Regulates the inflammatory response by mediating mono- and dimethylation of 'Lys-4' of histone H3 (H3K4me1 and H3K4me2, respectively), leading to activate the transcription of pro-inflammatory cytokines IL6 and TNF-alpha. Also involved in the regulation of stem cell quiescence by catalyzing the trimethylation of 'Lys-20' of histone H4 (H4K20me3), thereby promoting heterochromatin formation. In the brain, epigenetically controls quiescence of neural stem cells for sustaining a protected neural stem cell population and maintaining a stem cell reservoir for neurogenesis. Involved in proliferation, migration, paracrine and myogenic differentiation of bone marrow mesenchymal stem cells (BMSCs). Through the catalysis of XRCC5/Ku70 trimethylation, regulates BAX-mediated apoptosis. SETD4-catalyzed XRCC5 methylation results in XRCC5 translocation to the cytoplasm, where it interacts with BAX, sequestering it from the mitochondria, hence preventing BAX-mediated apoptosis. The sequence is that of SET domain-containing protein 4 from Mus musculus (Mouse).